The chain runs to 642 residues: Threonine--tRNA ligase (642 aa).

Residues 1-61 (MPVITLPDGS…ENDATLSIIT (61 aa)) enclose the TGS domain. The interval 243–534 (DHRKIGKQLD…LTEEFAGFFP (292 aa)) is catalytic. Zn(2+)-binding residues include C334, H385, and H511.

Belongs to the class-II aminoacyl-tRNA synthetase family. As to quaternary structure, homodimer. Zn(2+) is required as a cofactor.

The protein resides in the cytoplasm. The enzyme catalyses tRNA(Thr) + L-threonine + ATP = L-threonyl-tRNA(Thr) + AMP + diphosphate + H(+). Its function is as follows. Catalyzes the attachment of threonine to tRNA(Thr) in a two-step reaction: L-threonine is first activated by ATP to form Thr-AMP and then transferred to the acceptor end of tRNA(Thr). Also edits incorrectly charged L-seryl-tRNA(Thr). The protein is Threonine--tRNA ligase of Salmonella paratyphi A (strain ATCC 9150 / SARB42).